The chain runs to 208 residues: Ribosomal RNA large subunit methyltransferase E (208 aa).

Residues G62, W64, D82, D98, and D123 each contribute to the S-adenosyl-L-methionine site. The active-site Proton acceptor is K163.

This sequence belongs to the class I-like SAM-binding methyltransferase superfamily. RNA methyltransferase RlmE family.

It localises to the cytoplasm. It carries out the reaction uridine(2552) in 23S rRNA + S-adenosyl-L-methionine = 2'-O-methyluridine(2552) in 23S rRNA + S-adenosyl-L-homocysteine + H(+). In terms of biological role, specifically methylates the uridine in position 2552 of 23S rRNA at the 2'-O position of the ribose in the fully assembled 50S ribosomal subunit. This Edwardsiella ictaluri (strain 93-146) protein is Ribosomal RNA large subunit methyltransferase E.